Reading from the N-terminus, the 506-residue chain is Histidine ammonia-lyase (506 aa).

The segment at residues A143 to G145 is a cross-link (5-imidazolinone (Ala-Gly)). S144 carries the 2,3-didehydroalanine (Ser) modification.

Belongs to the PAL/histidase family. Contains an active site 4-methylidene-imidazol-5-one (MIO), which is formed autocatalytically by cyclization and dehydration of residues Ala-Ser-Gly.

Its subcellular location is the cytoplasm. It carries out the reaction L-histidine = trans-urocanate + NH4(+). It participates in amino-acid degradation; L-histidine degradation into L-glutamate; N-formimidoyl-L-glutamate from L-histidine: step 1/3. In Salmonella dublin (strain CT_02021853), this protein is Histidine ammonia-lyase.